The following is a 41-amino-acid chain: Alpha-conotoxin CIB (41 aa).

Residues Ser-1–Lys-21 constitute a propeptide that is removed on maturation. Cystine bridges form between Cys-23-Cys-29 and Cys-24-Cys-37. Residues Ser-25–Pro-27 form a ser-Xaa-Pro motif, crucial for potent interaction with nAChR region. The residue at position 37 (Cys-37) is a Cysteine amide.

The protein belongs to the conotoxin A superfamily. In terms of tissue distribution, expressed by the venom duct.

It is found in the secreted. Its function is as follows. Alpha-conotoxins act on postsynaptic membranes, they bind to the nicotinic acetylcholine receptors (nAChR) and thus inhibit them. This toxin blocks rat neuronal nAChR alpha-3-beta-2/CHRNA3-CHRNB2 (IC(50)=128.9 nM) and alpha-7/CHRNA7 (IC(50)=1511 nM). In vivo, intramuscular injection into zebrafish does not produce any effect on the locomotion of zebrafish. The protein is Alpha-conotoxin CIB of Conus catus (Cat cone).